Consider the following 581-residue polypeptide: DNA polymerase alpha subunit B (581 aa).

It belongs to the DNA polymerase alpha subunit B family. As to quaternary structure, DNA polymerase alpha:primase is a four subunit enzyme complex, which is assembled throughout the cell cycle, and consists of the two DNA polymerase subunits A and B, and the DNA primase large and small subunits. Subunit B binds to subunit A.

It is found in the nucleus. Its function is as follows. May play an essential role at the early stage of chromosomal DNA replication by coupling the polymerase alpha/primase complex to the cellular replication machinery. Required for the distribution of pie-1 in cell divsion. This chain is DNA polymerase alpha subunit B (div-1), found in Caenorhabditis elegans.